Consider the following 271-residue polypeptide: Formamidopyrimidine-DNA glycosylase (271 aa).

Proline 2 functions as the Schiff-base intermediate with DNA in the catalytic mechanism. Glutamate 3 functions as the Proton donor in the catalytic mechanism. The active-site Proton donor; for beta-elimination activity is lysine 58. Positions 91 and 109 each coordinate DNA. The segment at 236–270 adopts an FPG-type zinc-finger fold; it reads FVYGREGLACRVCATPVRRVVIGQRSTFFCPRCQR. The Proton donor; for delta-elimination activity role is filled by arginine 260.

It belongs to the FPG family. In terms of assembly, monomer. Zn(2+) is required as a cofactor.

The enzyme catalyses Hydrolysis of DNA containing ring-opened 7-methylguanine residues, releasing 2,6-diamino-4-hydroxy-5-(N-methyl)formamidopyrimidine.. It catalyses the reaction 2'-deoxyribonucleotide-(2'-deoxyribose 5'-phosphate)-2'-deoxyribonucleotide-DNA = a 3'-end 2'-deoxyribonucleotide-(2,3-dehydro-2,3-deoxyribose 5'-phosphate)-DNA + a 5'-end 5'-phospho-2'-deoxyribonucleoside-DNA + H(+). Functionally, involved in base excision repair of DNA damaged by oxidation or by mutagenic agents. Acts as a DNA glycosylase that recognizes and removes damaged bases. Has a preference for oxidized purines, such as 7,8-dihydro-8-oxoguanine (8-oxoG). Has AP (apurinic/apyrimidinic) lyase activity and introduces nicks in the DNA strand. Cleaves the DNA backbone by beta-delta elimination to generate a single-strand break at the site of the removed base with both 3'- and 5'-phosphates. The polypeptide is Formamidopyrimidine-DNA glycosylase (Aromatoleum aromaticum (strain DSM 19018 / LMG 30748 / EbN1) (Azoarcus sp. (strain EbN1))).